The sequence spans 482 residues: Protein nucleotidyltransferase YdiU (482 aa).

ATP contacts are provided by Gly88, Gly90, Arg91, Lys111, Asp123, Gly124, Arg174, and Arg181. Asp250 acts as the Proton acceptor in catalysis. Mg(2+)-binding residues include Asn251 and Asp260. Asp260 is an ATP binding site.

The protein belongs to the SELO family. Mg(2+) is required as a cofactor. It depends on Mn(2+) as a cofactor.

The catalysed reaction is L-seryl-[protein] + ATP = 3-O-(5'-adenylyl)-L-seryl-[protein] + diphosphate. The enzyme catalyses L-threonyl-[protein] + ATP = 3-O-(5'-adenylyl)-L-threonyl-[protein] + diphosphate. It catalyses the reaction L-tyrosyl-[protein] + ATP = O-(5'-adenylyl)-L-tyrosyl-[protein] + diphosphate. It carries out the reaction L-histidyl-[protein] + UTP = N(tele)-(5'-uridylyl)-L-histidyl-[protein] + diphosphate. The catalysed reaction is L-seryl-[protein] + UTP = O-(5'-uridylyl)-L-seryl-[protein] + diphosphate. The enzyme catalyses L-tyrosyl-[protein] + UTP = O-(5'-uridylyl)-L-tyrosyl-[protein] + diphosphate. Nucleotidyltransferase involved in the post-translational modification of proteins. It can catalyze the addition of adenosine monophosphate (AMP) or uridine monophosphate (UMP) to a protein, resulting in modifications known as AMPylation and UMPylation. This is Protein nucleotidyltransferase YdiU from Cronobacter sakazakii (strain ATCC BAA-894) (Enterobacter sakazakii).